The chain runs to 290 residues: MDKLIKTISASGAFRAYVLDCTETVRYAQERHHTLSSSTVALGRTLIANQILAANQKGDSKVTVKVIGDSSFGHIISVADTKGHVKGYIQNPGVDIKKTATGEVLVGPFMGQGHFVTITDYGTGNPYTSTTPLITGEIGEDLAYYLTESEQTPSAVGLNVLLDQEDKVKVAGGFMLQVLPGASDEEISHYEKRIQEMPAISTLLASENHIDALLAAIYGEEPYKRLAEEQLSFQCDCSKERFASALMNLPTADLQAMRDEDQGAEIVCQFCGIKYQFTEADLEVLINDKA.

Disulfide bonds link Cys-235-Cys-237 and Cys-268-Cys-271.

The protein belongs to the HSP33 family. In terms of processing, under oxidizing conditions two disulfide bonds are formed involving the reactive cysteines. Under reducing conditions zinc is bound to the reactive cysteines and the protein is inactive.

Its subcellular location is the cytoplasm. Redox regulated molecular chaperone. Protects both thermally unfolding and oxidatively damaged proteins from irreversible aggregation. Plays an important role in the bacterial defense system toward oxidative stress. The chain is 33 kDa chaperonin from Streptococcus equi subsp. zooepidemicus (strain H70).